The following is a 163-amino-acid chain: Pheromone-binding protein 1 (163 aa).

The signal sequence occupies residues 1–21; sequence MLGKISLLLLPVFVAINLVHS. 3 disulfide bridges follow: cysteine 40-cysteine 75, cysteine 71-cysteine 129, and cysteine 118-cysteine 138.

It belongs to the PBP/GOBP family. In terms of tissue distribution, antenna.

Functionally, this major soluble protein in olfactory sensilla of male moths might serve to solubilize the extremely hydrophobic pheromone molecules and to transport pheromone through the aqueous lymph to receptors located on olfactory cilia. The protein is Pheromone-binding protein 1 of Antheraea pernyi (Chinese oak silk moth).